Here is an 803-residue protein sequence, read N- to C-terminus: Volume-regulated anion channel subunit LRRC8B (803 aa).

The Cytoplasmic segment spans residues 1-25; that stretch reads MITLTELKCLADAQSSYHILKPWWD. Residues 26–46 form a helical membrane-spanning segment; the sequence is VFWYYITLIMLLVAVLAGALQ. Topologically, residues 47 to 119 are extracellular; that stretch reads LTQSRVLCCL…YEKQLHWFAK (73 aa). Cystine bridges form between Cys55–Cys304 and Cys109–Cys289. Asn78 carries N-linked (GlcNAc...) asparagine glycosylation. The helical transmembrane segment at 120-140 threads the bilayer; that stretch reads FFPYLVLLHTLIFAACSNFWL. At 141 to 261 the chain is on the cytoplasmic side; the sequence is HYPSTSSRLE…DIIYRVYLKQ (121 aa). Phosphoserine is present on residues Ser186 and Ser196. The chain crosses the membrane as a helical span at residues 262-282; the sequence is IIVKVILFVLIITYVPYFLSY. The Extracellular segment spans residues 283 to 307; it reads ITLEIDCSIDVQAFTGYKRYQCVYS. Residues 308–328 traverse the membrane as a helical segment; it reads LAEIFKVLASFYVILVMLYGL. The Cytoplasmic segment spans residues 329 to 803; sequence TSSYSLWWML…ERLQTCLDKC (475 aa). LRR repeat units lie at residues 415–439, 440–462, 464–486, 488–509, 511–532, 539–559, 562–582, 586–607, 609–630, 634–655, 657–678, 680–701, 703–724, 726–747, and 749–771; these read VKNS…VFEL, TEME…VAQL, NLRE…AFLE, NLRI…VFHL, NLKE…LHLE, NLRT…VTDL, SLQK…NNLK, NLKS…IFSL, NLHE…ISFQ, SLSC…IGAL, NLEQ…LFLC, KLHY…IQYL, NLQY…LFQC, KLQC…VGEL, and NLTH…EGCQ.

The protein belongs to the LRRC8 family. In terms of assembly, heterohexamer; oligomerizes with other LRRC8 proteins (LRRC8A, LRRC8C, LRRC8D and/or LRRC8E) to form a heterohexamer. In vivo, the subunit composition may depend primarily on expression levels, and heterooligomeric channels containing various proportions of the different LRRC8 proteins may coexist.

The protein resides in the cell membrane. The protein localises to the endoplasmic reticulum membrane. The enzyme catalyses chloride(in) = chloride(out). It carries out the reaction iodide(out) = iodide(in). It catalyses the reaction taurine(out) = taurine(in). Non-essential component of the volume-regulated anion channel (VRAC, also named VSOAC channel), an anion channel required to maintain a constant cell volume in response to extracellular or intracellular osmotic changes. The VRAC channel conducts iodide better than chloride and can also conduct organic osmolytes like taurine. Channel activity requires LRRC8A plus at least one other family member (LRRC8B, LRRC8C, LRRC8D or LRRC8E); channel characteristics depend on the precise subunit composition. This chain is Volume-regulated anion channel subunit LRRC8B, found in Mus musculus (Mouse).